The chain runs to 414 residues: Glucose-1-phosphate adenylyltransferase (414 aa).

Residues Tyr-99, Gly-164, 181 to 182 (EK), and Ser-199 each bind alpha-D-glucose 1-phosphate.

This sequence belongs to the bacterial/plant glucose-1-phosphate adenylyltransferase family. As to quaternary structure, homotetramer.

It carries out the reaction alpha-D-glucose 1-phosphate + ATP + H(+) = ADP-alpha-D-glucose + diphosphate. Its pathway is glycan biosynthesis; glycogen biosynthesis. Functionally, involved in the biosynthesis of ADP-glucose, a building block required for the elongation reactions to produce glycogen. Catalyzes the reaction between ATP and alpha-D-glucose 1-phosphate (G1P) to produce pyrophosphate and ADP-Glc. The protein is Glucose-1-phosphate adenylyltransferase of Bifidobacterium longum (strain DJO10A).